A 409-amino-acid chain; its full sequence is Lissencephaly-1 homolog (409 aa).

The LisH domain occupies 7–39 (QKEELNKAIADYLHQCGFEDTLNAFKQDANMPG). A coiled-coil region spans residues 54–80 (TSVIRLQKKVMDLETRLSEAEKEVHHG). Residues 72–95 (EAEKEVHHGGGPKKTRSPEDWIPR) form a disordered region. 7 WD repeats span residues 104–145 (GHRS…RTLK), 146–187 (GHTD…RTLH), 188–229 (GHDH…KTFQ), 231–269 (HGEWVRRVRPNADGSLIASCSNDQTIRVWVVASRECKCD), 272–332 (DHDH…CLVT), 335–374 (GHDNWVRAVMFHPGGKFIVSCSDDKTLRIWDYKNKRCAKT), and 377–409 (AHEHFVTTLDFHKSAPFVATGSVDLTLKVWECR).

It belongs to the WD repeat LIS1/nudF family.

Its subcellular location is the cytoplasm. The protein localises to the cytoskeleton. It is found in the microtubule organizing center. It localises to the centrosome. In terms of biological role, positively regulates the activity of the minus-end directed microtubule motor protein dynein. May enhance dynein-mediated microtubule sliding by targeting dynein to the microtubule plus end. Required for several dynein- and microtubule-dependent processes. This is Lissencephaly-1 homolog from Nematostella vectensis (Starlet sea anemone).